Reading from the N-terminus, the 432-residue chain is Delta-aminolevulinic acid dehydratase, chloroplastic (432 aa).

The interval 84 to 113 (AAPPVPAKPSAPEGTPAISPLVMPARPRRN) is disordered. The active-site Schiff-base intermediate with substrate is lysine 300. 5-aminolevulinate-binding residues include arginine 310 and lysine 322. Glutamate 338 serves as a coordination point for Mg(2+). Residue lysine 353 is the Schiff-base intermediate with substrate of the active site. 5-aminolevulinate contacts are provided by serine 379 and tyrosine 418.

It belongs to the ALAD family. As to quaternary structure, homooctamer. Mg(2+) serves as cofactor.

Its subcellular location is the plastid. It localises to the chloroplast. It carries out the reaction 2 5-aminolevulinate = porphobilinogen + 2 H2O + H(+). It functions in the pathway porphyrin-containing compound metabolism; protoporphyrin-IX biosynthesis; coproporphyrinogen-III from 5-aminolevulinate: step 1/4. Catalyzes an early step in the biosynthesis of tetrapyrroles. Binds two molecules of 5-aminolevulinate per subunit, each at a distinct site, and catalyzes their condensation to form porphobilinogen. This is Delta-aminolevulinic acid dehydratase, chloroplastic (HEMB) from Physcomitrium patens (Spreading-leaved earth moss).